The primary structure comprises 180 residues: Putative manganese efflux pump MntP (180 aa).

Helical transmembrane passes span Leu6–Ile26, Ile34–Tyr54, Ala67–Ile87, Gly103–Leu123, Leu130–Thr150, and Ile159–Phe179.

Belongs to the MntP (TC 9.B.29) family.

It is found in the cell membrane. Probably functions as a manganese efflux pump. The chain is Putative manganese efflux pump MntP from Desulforamulus reducens (strain ATCC BAA-1160 / DSM 100696 / MI-1) (Desulfotomaculum reducens).